A 525-amino-acid chain; its full sequence is Bifunctional purine biosynthesis protein PurH (525 aa).

The MGS-like domain maps to 1-149 (MSDPVIKRAL…KNHESVTVIT (149 aa)).

This sequence belongs to the PurH family.

It carries out the reaction (6R)-10-formyltetrahydrofolate + 5-amino-1-(5-phospho-beta-D-ribosyl)imidazole-4-carboxamide = 5-formamido-1-(5-phospho-D-ribosyl)imidazole-4-carboxamide + (6S)-5,6,7,8-tetrahydrofolate. The enzyme catalyses IMP + H2O = 5-formamido-1-(5-phospho-D-ribosyl)imidazole-4-carboxamide. Its pathway is purine metabolism; IMP biosynthesis via de novo pathway; 5-formamido-1-(5-phospho-D-ribosyl)imidazole-4-carboxamide from 5-amino-1-(5-phospho-D-ribosyl)imidazole-4-carboxamide (10-formyl THF route): step 1/1. It participates in purine metabolism; IMP biosynthesis via de novo pathway; IMP from 5-formamido-1-(5-phospho-D-ribosyl)imidazole-4-carboxamide: step 1/1. The polypeptide is Bifunctional purine biosynthesis protein PurH (Chlorobium phaeobacteroides (strain BS1)).